A 139-amino-acid polypeptide reads, in one-letter code: von Hippel-Lindau-like protein (139 aa).

The disordered stretch occupies residues 1–22 (MPWRAGNGVGLEAQAGTQEAGP). The tract at residues 54–135 (SRIIICNHSP…GQPVFANITL (82 aa)) is beta-domain.

It belongs to the VHL family. As to quaternary structure, interacts via the beta domain with the ODD domain of HIF1A. This interaction is independent of prolyl hydroxylation of HIF1A. In terms of tissue distribution, abundantly expressed in the placenta.

Its function is as follows. Functions as a dominant-negative VHL to serve as a protector of HIFalpha. The protein is von Hippel-Lindau-like protein (VHLL) of Homo sapiens (Human).